A 303-amino-acid chain; its full sequence is N-acetyl-D-glucosamine kinase (303 aa).

ATP is bound by residues 4-11 (GFDIGGTK) and 133-140 (GVGGGLIF). 4 residues coordinate Zn(2+): H157, C177, C179, and C184.

It belongs to the ROK (NagC/XylR) family. NagK subfamily.

The catalysed reaction is N-acetyl-D-glucosamine + ATP = N-acetyl-D-glucosamine 6-phosphate + ADP + H(+). It participates in cell wall biogenesis; peptidoglycan recycling. Its function is as follows. Catalyzes the phosphorylation of N-acetyl-D-glucosamine (GlcNAc) derived from cell-wall degradation, yielding GlcNAc-6-P. The protein is N-acetyl-D-glucosamine kinase of Escherichia coli (strain K12 / DH10B).